The primary structure comprises 873 residues: DNA mismatch repair protein MutS (873 aa).

Residue 620 to 627 coordinates ATP; sequence GPNMAGKS.

Belongs to the DNA mismatch repair MutS family.

Its function is as follows. This protein is involved in the repair of mismatches in DNA. It is possible that it carries out the mismatch recognition step. This protein has a weak ATPase activity. The polypeptide is DNA mismatch repair protein MutS (Ruminiclostridium cellulolyticum (strain ATCC 35319 / DSM 5812 / JCM 6584 / H10) (Clostridium cellulolyticum)).